Reading from the N-terminus, the 1382-residue chain is DNA-directed RNA polymerase subunit beta'' (1382 aa).

Residues cysteine 224, cysteine 294, cysteine 301, and cysteine 304 each coordinate Zn(2+).

This sequence belongs to the RNA polymerase beta' chain family. RpoC2 subfamily. As to quaternary structure, in plastids the minimal PEP RNA polymerase catalytic core is composed of four subunits: alpha, beta, beta', and beta''. When a (nuclear-encoded) sigma factor is associated with the core the holoenzyme is formed, which can initiate transcription. Requires Zn(2+) as cofactor.

It is found in the plastid. The protein localises to the chloroplast. The enzyme catalyses RNA(n) + a ribonucleoside 5'-triphosphate = RNA(n+1) + diphosphate. Its function is as follows. DNA-dependent RNA polymerase catalyzes the transcription of DNA into RNA using the four ribonucleoside triphosphates as substrates. The protein is DNA-directed RNA polymerase subunit beta'' of Dioscorea elephantipes (Elephant's foot yam).